The primary structure comprises 150 residues: D-aminoacyl-tRNA deacylase (150 aa).

The short motif at 136 to 137 is the Gly-cisPro motif, important for rejection of L-amino acids element; sequence GP.

This sequence belongs to the DTD family. As to quaternary structure, homodimer.

Its subcellular location is the cytoplasm. The catalysed reaction is glycyl-tRNA(Ala) + H2O = tRNA(Ala) + glycine + H(+). It carries out the reaction a D-aminoacyl-tRNA + H2O = a tRNA + a D-alpha-amino acid + H(+). Functionally, an aminoacyl-tRNA editing enzyme that deacylates mischarged D-aminoacyl-tRNAs. Also deacylates mischarged glycyl-tRNA(Ala), protecting cells against glycine mischarging by AlaRS. Acts via tRNA-based rather than protein-based catalysis; rejects L-amino acids rather than detecting D-amino acids in the active site. By recycling D-aminoacyl-tRNA to D-amino acids and free tRNA molecules, this enzyme counteracts the toxicity associated with the formation of D-aminoacyl-tRNA entities in vivo and helps enforce protein L-homochirality. In Staphylococcus aureus (strain bovine RF122 / ET3-1), this protein is D-aminoacyl-tRNA deacylase.